Consider the following 377-residue polypeptide: Protein-arginine rhamnosyltransferase (377 aa).

DTDP-beta-L-rhamnose is bound at residue tyrosine 15. The Proton acceptor role is filled by aspartate 17. Residues tyrosine 193, glutamine 255, and 271–275 (RGEDS) each bind dTDP-beta-L-rhamnose. Residue glutamate 273 is part of the active site.

It belongs to the glycosyltransferase 104 family.

The catalysed reaction is dTDP-beta-L-rhamnose + L-arginyl-[protein] = N(omega)-(alpha-L-rhamnosyl)-L-arginyl-[protein] + dTDP + H(+). Protein-arginine rhamnosyltransferase that catalyzes the transfer of a single rhamnose to elongation factor P (EF-P) on 'Lys-32', a modification required for EF-P-dependent rescue of polyproline stalled ribosomes. The sequence is that of Protein-arginine rhamnosyltransferase from Pseudomonas putida (strain ATCC 47054 / DSM 6125 / CFBP 8728 / NCIMB 11950 / KT2440).